Reading from the N-terminus, the 325-residue chain is UDP-N-acetylglucosamine transporter ROCK1 (325 aa).

Residues 1–13 (MATANGAKSPSSM) are Cytoplasmic-facing. The helical transmembrane segment at 14–34 (GPKVLFYSILLTLQYGAQPLI) threads the bilayer. Over 35–42 (SKRCIRKD) the chain is Lumenal. A helical transmembrane segment spans residues 43–63 (VIVTSSVLTCEIVKVICALIL). Residues 64–109 (MARNGSLKGLAKEWTLMGSLTASGLPAAIYALQNSLLQISYRSLDS) are Cytoplasmic-facing. The chain crosses the membrane as a helical span at residues 110-130 (LTFSILNQTKIFFTAFFTFII). Over 131–135 (LRQKQ) the chain is Lumenal. The chain crosses the membrane as a helical span at residues 136-156 (SILQIGALCLLIMAAVLLSVG). Topologically, residues 157-171 (EGSNKDSSGINADQK) are cytoplasmic. Residues 172–192 (LFYGIIPVLAASVLSGLASSL) form a helical membrane-spanning segment. Residues 193 to 203 (CQWASQVKKHS) lie on the Lumenal side of the membrane. Residues 204–224 (SYLMTVEMSIVGSLCLLVSTL) form a helical membrane-spanning segment. The Cytoplasmic portion of the chain corresponds to 225–241 (KSPDGEAIKKYGFFHGW). A helical membrane pass occupies residues 242 to 262 (TALTLVPVISNALGGILVGLV). Over 263 to 270 (TSHAGGVR) the chain is Lumenal. The chain crosses the membrane as a helical span at residues 271-291 (KGFVIVSALLVTALLQFAFEG). Residues 292-325 (KPPSSYCLVALPLVMSSISMYQKYPYIDKKKKKV) lie on the Cytoplasmic side of the membrane.

It belongs to the nucleotide-sugar transporter family. CMP-Sialate:CMP antiporter (TC 2.A.7.12) subfamily. In terms of tissue distribution, expressed in roots, cotyledons, leaves, stems, flowers and siliques.

It localises to the endoplasmic reticulum membrane. Mediates the transport of UDP-linked acetylated hexosamines across the endoplasmic reticulum (ER) membrane. Facilitates UDP-N-acetylglucosamine (UDP-GlcNAc) and UDP-N-acetylgalactosamine (UDP-GalNAc) transport. Regulates the cytokinin signal in meristematic cells through modulating activity of cytokinin oxidases/dehydrogenases. Part of the ER quality control system, which determines the fate of aberrant proteins in the secretory pathway. In Arabidopsis thaliana (Mouse-ear cress), this protein is UDP-N-acetylglucosamine transporter ROCK1.